Reading from the N-terminus, the 92-residue chain is C-C motif chemokine 4-like (92 aa).

Residues 1–23 (MKLCVTVLSLLVLVAAFCSLALS) form the signal peptide. Intrachain disulfides connect C34–C58 and C35–C74.

This sequence belongs to the intercrine beta (chemokine CC) family. As to quaternary structure, interacts with CCR5. In terms of tissue distribution, detected in B-cells.

The protein resides in the secreted. Chemokine that induces chemotaxis of cells expressing CCR5 or CCR1. Inhibits HIV replication in peripheral blood monocytes that express CCR5. In Homo sapiens (Human), this protein is C-C motif chemokine 4-like (CCL4L1).